Here is a 112-residue protein sequence, read N- to C-terminus: Urease subunit beta (112 aa).

Belongs to the urease beta subunit family. Heterotrimer of UreA (gamma), UreB (beta) and UreC (alpha) subunits. Three heterotrimers associate to form the active enzyme.

Its subcellular location is the cytoplasm. The enzyme catalyses urea + 2 H2O + H(+) = hydrogencarbonate + 2 NH4(+). It functions in the pathway nitrogen metabolism; urea degradation; CO(2) and NH(3) from urea (urease route): step 1/1. The protein is Urease subunit beta of Thioalkalivibrio sulfidiphilus (strain HL-EbGR7).